Reading from the N-terminus, the 589-residue chain is Transmembrane 9 superfamily member 1 (589 aa).

The N-terminal stretch at 1-27 (MTVLGHPRSWSCHCLPVLILLLGIGHG) is a signal peptide. A glycan (N-linked (GlcNAc...) asparagine) is linked at Asn178. 4 helical membrane passes run 237 to 257 (LSIINSMVLVFLLVGFVAVIL), 310 to 330 (VLGVGAQFLALGTGIIVMALL), 339 to 359 (GAINSAAILLYALTCCISGYV), and 373 to 393 (VWNIILTTSLFSVPFFLTWSV). Asn401 carries N-linked (GlcNAc...) asparagine glycosylation. Transmembrane regions (helical) follow at residues 412–432 (ILLLLTVWLLVGFPLTVIGGI), 482–502 (GILFFVFAILLSVGACISIAL), and 518–538 (SVLSVGSTGLFIFLYSVFYYA). N-linked (GlcNAc...) asparagine glycosylation occurs at Asn542. The helical transmembrane segment at 552–572 (FFGYSLLTGYVFFLMLGTISF) threads the bilayer.

Belongs to the nonaspanin (TM9SF) (TC 9.A.2) family.

The protein localises to the lysosome membrane. The protein resides in the cytoplasmic vesicle. Its subcellular location is the autophagosome membrane. Its function is as follows. Plays an essential role in autophagy. This Rattus norvegicus (Rat) protein is Transmembrane 9 superfamily member 1 (Tm9sf1).